The following is a 176-amino-acid chain: Ribosome maturation factor RimM (176 aa).

The 80-residue stretch at 97 to 176 (EDEFYWRDLI…QILVDWDPDF (80 aa)) folds into the PRC barrel domain.

It belongs to the RimM family. As to quaternary structure, binds ribosomal protein uS19.

The protein resides in the cytoplasm. Functionally, an accessory protein needed during the final step in the assembly of 30S ribosomal subunit, possibly for assembly of the head region. Essential for efficient processing of 16S rRNA. May be needed both before and after RbfA during the maturation of 16S rRNA. It has affinity for free ribosomal 30S subunits but not for 70S ribosomes. In Shewanella sp. (strain MR-4), this protein is Ribosome maturation factor RimM.